The following is a 795-amino-acid chain: Putative replication origin-binding protein (795 aa).

The Helicase ATP-binding domain maps to 121–289 (WLSNDKIKTL…DNFGKSIVVN (169 aa)). Residue 134–141 (SPMGTGKT) participates in ATP binding.

The protein belongs to the mimivirus R1 family.

Its function is as follows. Probably involved in DNA replication. May bind the genome origin of replication (ori). The polypeptide is Putative replication origin-binding protein (Acanthamoeba polyphaga (Amoeba)).